A 779-amino-acid chain; its full sequence is Endonuclease MutS2 (779 aa).

328-335 contacts ATP; that stretch reads GPNTGGKT. One can recognise a Smr domain in the interval 704–779; sequence LDLRGKRYEE…GSGATIVTLG (76 aa).

It belongs to the DNA mismatch repair MutS family. MutS2 subfamily. In terms of assembly, homodimer. Binds to stalled ribosomes, contacting rRNA.

Functionally, endonuclease that is involved in the suppression of homologous recombination and thus may have a key role in the control of bacterial genetic diversity. Its function is as follows. Acts as a ribosome collision sensor, splitting the ribosome into its 2 subunits. Detects stalled/collided 70S ribosomes which it binds and splits by an ATP-hydrolysis driven conformational change. Acts upstream of the ribosome quality control system (RQC), a ribosome-associated complex that mediates the extraction of incompletely synthesized nascent chains from stalled ribosomes and their subsequent degradation. Probably generates substrates for RQC. This Streptococcus agalactiae serotype Ia (strain ATCC 27591 / A909 / CDC SS700) protein is Endonuclease MutS2.